The following is a 156-amino-acid chain: Small ribosomal subunit protein uS7 (156 aa).

This sequence belongs to the universal ribosomal protein uS7 family. In terms of assembly, part of the 30S ribosomal subunit. Contacts proteins S9 and S11.

In terms of biological role, one of the primary rRNA binding proteins, it binds directly to 16S rRNA where it nucleates assembly of the head domain of the 30S subunit. Is located at the subunit interface close to the decoding center, probably blocks exit of the E-site tRNA. This is Small ribosomal subunit protein uS7 from Erythrobacter litoralis (strain HTCC2594).